The primary structure comprises 351 residues: F-box protein At1g70590 (351 aa).

The tract at residues 1-60 is disordered; the sequence is MKQRTWPCRSEGSRFSSLSFLKPHDKDKRSRISSINKATAKSTTSSRSSSSSSSSRPPSN. Over residues 32-41 the composition is skewed to polar residues; the sequence is ISSINKATAK. Positions 42 to 59 are enriched in low complexity; it reads STTSSRSSSSSSSSRPPS. The F-box domain occupies 62 to 111; it reads FGDFSMLPYDILMKIAAPFSHPNLQAASLVCKSWRDALKPLRESMLLIRW. The Sel1-like repeat unit spans residues 105–141; that stretch reads SMLLIRWGKKYKHGRGGVRANLDKALDSFLKGAMRGS. The TPR repeat unit spans residues 142–175; sequence TLAMVDAGLVYWERGEKEKAVNLYRRASELGDAV.

The polypeptide is F-box protein At1g70590 (Arabidopsis thaliana (Mouse-ear cress)).